Consider the following 258-residue polypeptide: Ribosomal RNA small subunit methyltransferase J (258 aa).

Residues 107–108 (RD), 123–124 (ER), 159–160 (SS), and D177 each bind S-adenosyl-L-methionine.

This sequence belongs to the methyltransferase superfamily. RsmJ family.

It localises to the cytoplasm. It carries out the reaction guanosine(1516) in 16S rRNA + S-adenosyl-L-methionine = N(2)-methylguanosine(1516) in 16S rRNA + S-adenosyl-L-homocysteine + H(+). Specifically methylates the guanosine in position 1516 of 16S rRNA. The chain is Ribosomal RNA small subunit methyltransferase J from Shewanella sediminis (strain HAW-EB3).